We begin with the raw amino-acid sequence, 237 residues long: Flagellar L-ring protein (237 aa).

A signal peptide spans methionine 1 to glycine 24. A lipid anchor (N-palmitoyl cysteine) is attached at cysteine 25. The S-diacylglycerol cysteine moiety is linked to residue cysteine 25.

Belongs to the FlgH family. As to quaternary structure, the basal body constitutes a major portion of the flagellar organelle and consists of four rings (L,P,S, and M) mounted on a central rod.

It is found in the cell outer membrane. The protein localises to the bacterial flagellum basal body. In terms of biological role, assembles around the rod to form the L-ring and probably protects the motor/basal body from shearing forces during rotation. The protein is Flagellar L-ring protein of Pseudomonas syringae pv. tomato (strain ATCC BAA-871 / DC3000).